A 169-amino-acid polypeptide reads, in one-letter code: uncharacterized protein (169 aa).

A helical transmembrane segment spans residues 10–30; it reads YFVTILIIIIIILIVLLIVFL. A disordered region spans residues 98–123; sequence QSKPINKNNQQTKNTPTPLDDRPDLS. Residues 100–115 are compositionally biased toward low complexity; the sequence is KPINKNNQQTKNTPTP.

The protein resides in the membrane. This is an uncharacterized protein from Acanthamoeba polyphaga (Amoeba).